A 181-amino-acid polypeptide reads, in one-letter code: Adenylate kinase (181 aa).

10–15 (GAGKGT) is a binding site for ATP. Residues 30–59 (STGELFRKNIQDGTKLGIEAKRYLDAGDLV) form an NMP region. AMP contacts are provided by residues threonine 31, arginine 36, 57–59 (DLV), 85–88 (GYPR), and glutamine 92. Positions 126-132 (GRGRADD) are LID. ATP is bound at residue arginine 127. Residues arginine 129 and arginine 140 each contribute to the AMP site. An ATP-binding site is contributed by glycine 166.

It belongs to the adenylate kinase family. Monomer.

The protein localises to the cytoplasm. The enzyme catalyses AMP + ATP = 2 ADP. It functions in the pathway purine metabolism; AMP biosynthesis via salvage pathway; AMP from ADP: step 1/1. In terms of biological role, catalyzes the reversible transfer of the terminal phosphate group between ATP and AMP. Plays an important role in cellular energy homeostasis and in adenine nucleotide metabolism. This is Adenylate kinase from Mycobacterium marinum (strain ATCC BAA-535 / M).